Here is a 152-residue protein sequence, read N- to C-terminus: UPF0225 protein YchJ (152 aa).

Belongs to the UPF0225 family.

This Shigella dysenteriae serotype 1 (strain Sd197) protein is UPF0225 protein YchJ.